A 125-amino-acid chain; its full sequence is Secretion system apparatus protein SsaO (125 aa).

This is Secretion system apparatus protein SsaO (ssaO) from Salmonella typhimurium (strain LT2 / SGSC1412 / ATCC 700720).